Reading from the N-terminus, the 149-residue chain is Snake venom vascular endothelial growth factor toxin 2 (149 aa).

The N-terminal stretch at 1–24 is a signal peptide; it reads MAAYLLAVAILFCIQGWPSGTVQG. Pyrrolidone carboxylic acid is present on Q25. 3 disulfides stabilise this stretch: C38/C80, C69/C115, and C73/C117. Residues 118-149 form a disordered region; that stretch reads RPRSGRVNSGKRKRNPEEGGAESQVPLGLTSF.

Belongs to the PDGF/VEGF growth factor family. Snake venom VEGF subfamily. In terms of assembly, homodimer; disulfide-linked. Interacts with VEGF receptor-1 (FLT1) with a high affinity, whereas it binds to VEGF receptor-2 (KDR) with a low affinity. Does not bind VEGF receptor-3 (FLT4). As to expression, expressed by the venom gland.

It is found in the secreted. Functionally, snake venom VEGFs that may contribute to venom dispersion and prey subjugation by inducing vascular permeability and hypotension. This protein induces an increase in capillary permeability after intradermal injection, as well as a drastic hypotensive effect after intravenous injection. The hypotension is mediated by nitric oxide (NO), which is produced by VEGF-activated endothelium NO synthase. Also induces angiogenesis in vitro. Like other crotalid VEGFs, this protein interacts with VEGF receptor-1 (FLT1) with a high affinity, whereas it binds to VEGF receptor-2 (KDR) with a low affinity. The polypeptide is Snake venom vascular endothelial growth factor toxin 2 (Sistrurus catenatus edwardsii (Desert massasauga)).